Reading from the N-terminus, the 461-residue chain is Zinc transporter 6 (461 aa).

The Cytoplasmic portion of the chain corresponds to 1 to 33; sequence MGTIHLFRKPQRSFFGKLLREFRLVAADRRSWK. The chain crosses the membrane as a helical span at residues 34–54; the sequence is ILLFGVINLICTGFLLMWCSS. Residues 55–64 are Extracellular-facing; it reads TNSIALTAYT. A helical transmembrane segment spans residues 65 to 85; that stretch reads YLTIFDLFSLMTCLISYWVTL. Residues 86–98 lie on the Cytoplasmic side of the membrane; that stretch reads RKPSPVYSFGFER. Residues 99–119 form a helical membrane-spanning segment; the sequence is LEVLAVFASTVLAQLGALFIL. The Extracellular segment spans residues 120-134; the sequence is KESAERFLEQPEIHT. Residues 135–155 traverse the membrane as a helical segment; the sequence is GRLLVGTFVALCFNLFTMLSI. Residues 156 to 200 are Cytoplasmic-facing; that stretch reads RNKPFAYVSEAASTSWLQEHVADLSRSLCGIIPGLSSIFLPRMNP. The chain crosses the membrane as a helical span at residues 201-221; that stretch reads FVLIDLAGAFALCITYMLIEI. At 222–223 the chain is on the extracellular side; it reads NN. Residues 224-244 form a helical membrane-spanning segment; it reads YFAVDTASAIAIALMTFGTMY. Topologically, residues 245-461 are cytoplasmic; sequence PMSVYSGKVL…TNNRIGQPRP (217 aa). Residues 371–392 form a disordered region; sequence NPVTSTPAKPSSPPPEFSFNTP.

This sequence belongs to the cation diffusion facilitator (CDF) transporter (TC 2.A.4) family. SLC30A subfamily. Heterodimer with SLC30A5; form a functional zinc ion transmembrane transporter. In terms of tissue distribution, expressed in brain; especially in cerebellum, hippocampus, parahippocampal gyrus, superior and middle temporal gyrus. Also expressed in B-cells, colon, eye, and lung. Lower expression was present in bone, brain, cervix, ear, heart, kidney, muscle, nerve, pancreas, prostate, skin, stomach, and testis.

The protein resides in the golgi apparatus. It is found in the trans-Golgi network membrane. In terms of biological role, has probably no intrinsic transporter activity but together with SLC30A5 forms a functional zinc ion:proton antiporter heterodimer, mediating zinc entry into the lumen of organelles along the secretory pathway. As part of that zinc ion:proton antiporter, contributes to zinc ion homeostasis within the early secretory pathway and regulates the activation and folding of enzymes like alkaline phosphatases and enzymes involved in phosphatidylinositol glycan anchor biosynthesis. In Homo sapiens (Human), this protein is Zinc transporter 6.